The primary structure comprises 378 residues: Acetylornithine deacetylase (378 aa).

Residue histidine 76 coordinates Zn(2+). Residue aspartate 78 is part of the active site. Residue aspartate 108 coordinates Zn(2+). Glutamate 140 is a catalytic residue. Glutamate 141, glutamate 165, and histidine 351 together coordinate Zn(2+).

Belongs to the peptidase M20A family. ArgE subfamily. As to quaternary structure, homodimer. It depends on Zn(2+) as a cofactor. Requires Co(2+) as cofactor. The cofactor is glutathione.

The protein localises to the cytoplasm. The enzyme catalyses N(2)-acetyl-L-ornithine + H2O = L-ornithine + acetate. It functions in the pathway amino-acid biosynthesis; L-arginine biosynthesis; L-ornithine from N(2)-acetyl-L-ornithine (linear): step 1/1. Catalyzes the hydrolysis of the amide bond of N(2)-acetylated L-amino acids. Cleaves the acetyl group from N-acetyl-L-ornithine to form L-ornithine, an intermediate in L-arginine biosynthesis pathway, and a branchpoint in the synthesis of polyamines. The sequence is that of Acetylornithine deacetylase from Aliivibrio salmonicida (strain LFI1238) (Vibrio salmonicida (strain LFI1238)).